We begin with the raw amino-acid sequence, 105 residues long: Large ribosomal subunit protein uL24 (105 aa).

Belongs to the universal ribosomal protein uL24 family. Part of the 50S ribosomal subunit.

Functionally, one of two assembly initiator proteins, it binds directly to the 5'-end of the 23S rRNA, where it nucleates assembly of the 50S subunit. In terms of biological role, one of the proteins that surrounds the polypeptide exit tunnel on the outside of the subunit. This Rhodospirillum centenum (strain ATCC 51521 / SW) protein is Large ribosomal subunit protein uL24.